The chain runs to 875 residues: Neurotrypsin (875 aa).

A signal peptide spans 1-20; sequence MTLARFVLALVLGALPEVVG. Asn26 carries N-linked (GlcNAc...) asparagine glycosylation. Residues 29-68 are disordered; the sequence is LHHRHRHSPPPGPQYPYYLPTHQRPPRTRPPPPLPRFSRP. One can recognise a Kringle domain in the interval 93-165; sequence CPPGEPWVSV…GKVDWGYCDC (73 aa). Disulfide bonds link Cys93–Cys165, Cys109–Cys149, Cys138–Cys163, Cys195–Cys259, Cys208–Cys269, Cys239–Cys249, Cys305–Cys369, Cys318–Cys379, Cys349–Cys359, Cys412–Cys475, Cys425–Cys485, Cys455–Cys465, Cys525–Cys589, Cys538–Cys599, Cys569–Cys579, Cys619–Cys750, Cys661–Cys677, Cys765–Cys831, Cys794–Cys808, and Cys821–Cys850. 4 SRCR domains span residues 170–271, 280–381, 387–487, and 500–601; these read VRLR…TCSF, IRLV…SCTP, IRLA…ACYP, and VRLM…ICDY. The interval 619–630 is zymogen activation region; that stretch reads CGLRLLHRRQKR. One can recognise a Peptidase S1 domain in the interval 631–874; that stretch reads IIGGKNSLRG…FVPWIKSVTK (244 aa). His676 serves as the catalytic Charge relay system. Asn683 carries an N-linked (GlcNAc...) asparagine glycan. Asp726 acts as the Charge relay system in catalysis. Catalysis depends on Ser825, which acts as the Charge relay system.

The protein belongs to the peptidase S1 family.

It is found in the secreted. In terms of biological role, plays a role in neuronal plasticity and the proteolytic action may subserve structural reorganizations associated with learning and memory operations. The sequence is that of Neurotrypsin (PRSS12) from Trachypithecus phayrei (Phayre's leaf monkey).